A 251-amino-acid polypeptide reads, in one-letter code: NADPH-dependent oxidoreductase (251 aa).

This sequence belongs to the flavin oxidoreductase frp family. It depends on FMN as a cofactor.

Its function is as follows. Reduces FMN, organic nitro compounds and disulfide DTNB. Involved in maintenance of the cellular redox state and the disulfide stress response. The polypeptide is NADPH-dependent oxidoreductase (nfrA) (Staphylococcus aureus (strain MRSA252)).